The sequence spans 260 residues: MSHDDLMLALALADRADELTRVRFGALDLRIDTKPDLTPVTDADRAVESDVRQTLGRDRPGDGVLGEEFGGSTTFTGRQWIVDPIDGTKNFVRGVPVWASLIALLEDGVPSVGVVSAPALQRRWWAARGRGAFASVDGARPHRLSVSSVAELHSASLSFSSLSGWARPGLRERFIGLTDTVWRVRAYGDFLSYCLVAEGAVDIAAEPQVSVWDLAALDIVVREAGGRLTSLDGVAGPHGGSAVATNGLLHDEVLTRLNAG.

Positions 67, 83, 85, and 86 each coordinate Mg(2+). Residue Glu67 participates in substrate binding. Substrate is bound by residues 85 to 88 (IDGT), Arg185, and Asp213. Residue Asp213 participates in Mg(2+) binding.

The protein belongs to the inositol monophosphatase superfamily. Mg(2+) is required as a cofactor.

It carries out the reaction L-histidinol phosphate + H2O = L-histidinol + phosphate. It participates in amino-acid biosynthesis; L-histidine biosynthesis; L-histidine from 5-phospho-alpha-D-ribose 1-diphosphate: step 8/9. Catalyzes the dephosphorylation of histidinol-phosphate to histidinol, the direct precursor of histidine. The sequence is that of Histidinol-phosphatase (hisN) from Mycobacterium tuberculosis (strain ATCC 25618 / H37Rv).